A 159-amino-acid chain; its full sequence is D-aminoacyl-tRNA deacylase (159 aa).

The short motif at 146 to 147 (GP) is the Gly-cisPro motif, important for rejection of L-amino acids element.

The protein belongs to the DTD family. As to quaternary structure, homodimer.

Its subcellular location is the cytoplasm. The enzyme catalyses glycyl-tRNA(Ala) + H2O = tRNA(Ala) + glycine + H(+). It catalyses the reaction a D-aminoacyl-tRNA + H2O = a tRNA + a D-alpha-amino acid + H(+). Its function is as follows. An aminoacyl-tRNA editing enzyme that deacylates mischarged D-aminoacyl-tRNAs. Also deacylates mischarged glycyl-tRNA(Ala), protecting cells against glycine mischarging by AlaRS. Acts via tRNA-based rather than protein-based catalysis; rejects L-amino acids rather than detecting D-amino acids in the active site. By recycling D-aminoacyl-tRNA to D-amino acids and free tRNA molecules, this enzyme counteracts the toxicity associated with the formation of D-aminoacyl-tRNA entities in vivo and helps enforce protein L-homochirality. The sequence is that of D-aminoacyl-tRNA deacylase from Bifidobacterium adolescentis (strain ATCC 15703 / DSM 20083 / NCTC 11814 / E194a).